The following is a 650-amino-acid chain: Putative F-box protein R757 (650 aa).

The F-box domain maps to 7–53 (FSVMESLPTELAYHVLSFIDFNSVVTYRLCSQESNNFIKSMLVFFPI).

This is Putative F-box protein R757 from Acanthamoeba polyphaga mimivirus (APMV).